The sequence spans 107 residues: Large ribosomal subunit protein uL24 (107 aa).

Belongs to the universal ribosomal protein uL24 family. Part of the 50S ribosomal subunit.

Functionally, one of two assembly initiator proteins, it binds directly to the 5'-end of the 23S rRNA, where it nucleates assembly of the 50S subunit. Its function is as follows. One of the proteins that surrounds the polypeptide exit tunnel on the outside of the subunit. This Caldanaerobacter subterraneus subsp. tengcongensis (strain DSM 15242 / JCM 11007 / NBRC 100824 / MB4) (Thermoanaerobacter tengcongensis) protein is Large ribosomal subunit protein uL24.